Here is a 245-residue protein sequence, read N- to C-terminus: Orotidine 5'-phosphate decarboxylase (245 aa).

Residues aspartate 22, lysine 44, 71–80, threonine 131, arginine 192, glutamine 201, glycine 221, and arginine 222 each bind substrate; that span reads DLKFHDIPNT. Catalysis depends on lysine 73, which acts as the Proton donor.

Belongs to the OMP decarboxylase family. Type 1 subfamily. In terms of assembly, homodimer.

The enzyme catalyses orotidine 5'-phosphate + H(+) = UMP + CO2. The protein operates within pyrimidine metabolism; UMP biosynthesis via de novo pathway; UMP from orotate: step 2/2. Catalyzes the decarboxylation of orotidine 5'-monophosphate (OMP) to uridine 5'-monophosphate (UMP). The protein is Orotidine 5'-phosphate decarboxylase of Escherichia coli O45:K1 (strain S88 / ExPEC).